The primary structure comprises 342 residues: Phosphoribosylformylglycinamidine cyclo-ligase (342 aa).

This sequence belongs to the AIR synthase family.

It localises to the cytoplasm. The catalysed reaction is 2-formamido-N(1)-(5-O-phospho-beta-D-ribosyl)acetamidine + ATP = 5-amino-1-(5-phospho-beta-D-ribosyl)imidazole + ADP + phosphate + H(+). It functions in the pathway purine metabolism; IMP biosynthesis via de novo pathway; 5-amino-1-(5-phospho-D-ribosyl)imidazole from N(2)-formyl-N(1)-(5-phospho-D-ribosyl)glycinamide: step 2/2. This Gloeothece citriformis (strain PCC 7424) (Cyanothece sp. (strain PCC 7424)) protein is Phosphoribosylformylglycinamidine cyclo-ligase.